The sequence spans 219 residues: Flagellar transcriptional regulator FlhC (219 aa).

Residues Cys-137, Cys-140, Cys-157, and Cys-160 each coordinate Zn(2+).

It belongs to the FlhC family. Heterohexamer composed of two FlhC and four FlhD subunits. Each FlhC binds a FlhD dimer, forming a heterotrimer, and a hexamer assembles by dimerization of two heterotrimers. The cofactor is Zn(2+).

Its subcellular location is the cytoplasm. In terms of biological role, functions in complex with FlhD as a master transcriptional regulator that regulates transcription of several flagellar and non-flagellar operons by binding to their promoter region. Activates expression of class 2 flagellar genes, including fliA, which is a flagellum-specific sigma factor that turns on the class 3 genes. Also regulates genes whose products function in a variety of physiological pathways. In Paraburkholderia phymatum (strain DSM 17167 / CIP 108236 / LMG 21445 / STM815) (Burkholderia phymatum), this protein is Flagellar transcriptional regulator FlhC.